Consider the following 276-residue polypeptide: Mitochondrial outer membrane protein porin of 36 kDa (276 aa).

The protein belongs to the eukaryotic mitochondrial porin (TC 1.B.8.1) family.

Its subcellular location is the mitochondrion outer membrane. Forms a channel through the cell membrane that allows diffusion of small hydrophilic molecules. The channel adopts an open conformation at low or zero membrane potential and a closed conformation at potentials above 30-40 mV. The open state has a weak anion selectivity whereas the closed state is cation-selective. In Solanum tuberosum (Potato), this protein is Mitochondrial outer membrane protein porin of 36 kDa.